The sequence spans 276 residues: Thiazole synthase (276 aa).

Lys112 (schiff-base intermediate with DXP) is an active-site residue. 1-deoxy-D-xylulose 5-phosphate contacts are provided by residues Gly173, 199 to 200 (AG), and 221 to 222 (NT).

The protein belongs to the ThiG family. Homotetramer. Forms heterodimers with either ThiH or ThiS.

Its subcellular location is the cytoplasm. It carries out the reaction [ThiS sulfur-carrier protein]-C-terminal-Gly-aminoethanethioate + 2-iminoacetate + 1-deoxy-D-xylulose 5-phosphate = [ThiS sulfur-carrier protein]-C-terminal Gly-Gly + 2-[(2R,5Z)-2-carboxy-4-methylthiazol-5(2H)-ylidene]ethyl phosphate + 2 H2O + H(+). Its pathway is cofactor biosynthesis; thiamine diphosphate biosynthesis. Catalyzes the rearrangement of 1-deoxy-D-xylulose 5-phosphate (DXP) to produce the thiazole phosphate moiety of thiamine. Sulfur is provided by the thiocarboxylate moiety of the carrier protein ThiS. In vitro, sulfur can be provided by H(2)S. This Synechococcus sp. (strain ATCC 27144 / PCC 6301 / SAUG 1402/1) (Anacystis nidulans) protein is Thiazole synthase.